The chain runs to 220 residues: Ribosomal RNA large subunit methyltransferase E (220 aa).

The S-adenosyl-L-methionine site is built by glycine 60, tryptophan 62, aspartate 92, aspartate 108, and aspartate 133. Residue lysine 173 is the Proton acceptor of the active site. The tract at residues 195 to 220 is disordered; it reads APRKPKASRDKSSETFILGRHLKRPR.

The protein belongs to the class I-like SAM-binding methyltransferase superfamily. RNA methyltransferase RlmE family.

The protein resides in the cytoplasm. It carries out the reaction uridine(2552) in 23S rRNA + S-adenosyl-L-methionine = 2'-O-methyluridine(2552) in 23S rRNA + S-adenosyl-L-homocysteine + H(+). Its function is as follows. Specifically methylates the uridine in position 2552 of 23S rRNA at the 2'-O position of the ribose in the fully assembled 50S ribosomal subunit. This chain is Ribosomal RNA large subunit methyltransferase E, found in Burkholderia lata (strain ATCC 17760 / DSM 23089 / LMG 22485 / NCIMB 9086 / R18194 / 383).